The chain runs to 117 residues: UPF0642 protein C32H8.05 (117 aa).

The segment at 39–117 is disordered; that stretch reads DQVNDLTKSS…SNFSKFLKKK (79 aa). A compositionally biased stretch (basic residues) spans 93 to 106; the sequence is KWAKKHLKKGKRAK. Residues 107 to 117 are compositionally biased toward low complexity; the sequence is NSNFSKFLKKK.

This sequence belongs to the UPF0642 family.

Its subcellular location is the nucleus. The protein localises to the nucleolus. In Schizosaccharomyces pombe (strain 972 / ATCC 24843) (Fission yeast), this protein is UPF0642 protein C32H8.05.